Reading from the N-terminus, the 170-residue chain is MKDAYLYVVEKSVAWEFDSPEYGRLARKIVELLYERKEDLTDDRIAILLNISTAETRRILQYLMKLNLIGVRKKTTEDYRIEYAWYVDDEIIRQAISSRARVVREKLSMLIRSLTEGAYYICPSCFIRYSLDEAVNWGGTCPICGTQLEYVENVEEINKLTKIFEKLEKL.

The region spanning 1–93 (MKDAYLYVVE…AWYVDDEIIR (93 aa)) is the HTH TFE/IIEalpha-type domain.

The protein belongs to the TFE family. As to quaternary structure, monomer. Interaction with RNA polymerase subunits RpoF and RpoE is necessary for Tfe stimulatory transcription activity. Able to interact with Tbp and RNA polymerase in the absence of DNA promoter. Interacts both with the preinitiation and elongation complexes.

In terms of biological role, transcription factor that plays a role in the activation of archaeal genes transcribed by RNA polymerase. Facilitates transcription initiation by enhancing TATA-box recognition by TATA-box-binding protein (Tbp), and transcription factor B (Tfb) and RNA polymerase recruitment. Not absolutely required for transcription in vitro, but particularly important in cases where Tbp or Tfb function is not optimal. It dynamically alters the nucleic acid-binding properties of RNA polymerases by stabilizing the initiation complex and destabilizing elongation complexes. Seems to translocate with the RNA polymerase following initiation and acts by binding to the non template strand of the transcription bubble in elongation complexes. This chain is Transcription factor E, found in Pyrobaculum arsenaticum (strain DSM 13514 / JCM 11321 / PZ6).